A 239-amino-acid polypeptide reads, in one-letter code: tRNA (guanine-N(1)-)-methyltransferase (239 aa).

S-adenosyl-L-methionine is bound by residues Gly-113 and 137–142 (LGDYVL).

The protein belongs to the RNA methyltransferase TrmD family. As to quaternary structure, homodimer.

Its subcellular location is the cytoplasm. The enzyme catalyses guanosine(37) in tRNA + S-adenosyl-L-methionine = N(1)-methylguanosine(37) in tRNA + S-adenosyl-L-homocysteine + H(+). In terms of biological role, specifically methylates guanosine-37 in various tRNAs. In Cutibacterium acnes (strain DSM 16379 / KPA171202) (Propionibacterium acnes), this protein is tRNA (guanine-N(1)-)-methyltransferase.